Here is a 284-residue protein sequence, read N- to C-terminus: Digeranylgeranylglyceryl phosphate synthase (284 aa).

7 helical membrane passes run 10–30 (IHNV…SSMW), 37–57 (LILA…INDV), 76–98 (AVSL…ILSA), 102–119 (YLQF…IFYA), 126–146 (GIYG…YGGL), 217–237 (LPLF…FLYI), and 260–280 (GSAF…QFLF).

It belongs to the UbiA prenyltransferase family. DGGGP synthase subfamily. Mg(2+) serves as cofactor.

Its subcellular location is the cell membrane. It catalyses the reaction sn-3-O-(geranylgeranyl)glycerol 1-phosphate + (2E,6E,10E)-geranylgeranyl diphosphate = 2,3-bis-O-(geranylgeranyl)-sn-glycerol 1-phosphate + diphosphate. Its pathway is membrane lipid metabolism; glycerophospholipid metabolism. Functionally, prenyltransferase that catalyzes the transfer of the geranylgeranyl moiety of geranylgeranyl diphosphate (GGPP) to the C2 hydroxyl of (S)-3-O-geranylgeranylglyceryl phosphate (GGGP). This reaction is the second ether-bond-formation step in the biosynthesis of archaeal membrane lipids. This chain is Digeranylgeranylglyceryl phosphate synthase, found in Metallosphaera sedula (strain ATCC 51363 / DSM 5348 / JCM 9185 / NBRC 15509 / TH2).